The primary structure comprises 372 residues: Queuine tRNA-ribosyltransferase (372 aa).

D92 functions as the Proton acceptor in the catalytic mechanism. Substrate is bound by residues 92–96 (DSGGY), D146, Q188, and G215. An RNA binding region spans residues 246-252 (GIGSLKE). D265 functions as the Nucleophile in the catalytic mechanism. Residues 270-274 (TRLGR) form an RNA binding; important for wobble base 34 recognition region. Zn(2+) contacts are provided by C303, C305, C308, and H334.

It belongs to the queuine tRNA-ribosyltransferase family. As to quaternary structure, homodimer. Within each dimer, one monomer is responsible for RNA recognition and catalysis, while the other monomer binds to the replacement base PreQ1. Zn(2+) is required as a cofactor.

It carries out the reaction 7-aminomethyl-7-carbaguanine + guanosine(34) in tRNA = 7-aminomethyl-7-carbaguanosine(34) in tRNA + guanine. Its pathway is tRNA modification; tRNA-queuosine biosynthesis. Catalyzes the base-exchange of a guanine (G) residue with the queuine precursor 7-aminomethyl-7-deazaguanine (PreQ1) at position 34 (anticodon wobble position) in tRNAs with GU(N) anticodons (tRNA-Asp, -Asn, -His and -Tyr). Catalysis occurs through a double-displacement mechanism. The nucleophile active site attacks the C1' of nucleotide 34 to detach the guanine base from the RNA, forming a covalent enzyme-RNA intermediate. The proton acceptor active site deprotonates the incoming PreQ1, allowing a nucleophilic attack on the C1' of the ribose to form the product. After dissociation, two additional enzymatic reactions on the tRNA convert PreQ1 to queuine (Q), resulting in the hypermodified nucleoside queuosine (7-(((4,5-cis-dihydroxy-2-cyclopenten-1-yl)amino)methyl)-7-deazaguanosine). The protein is Queuine tRNA-ribosyltransferase of Prochlorococcus marinus (strain AS9601).